A 412-amino-acid chain; its full sequence is Argininosuccinate synthase (412 aa).

Residues 20–28 and Ala48 contribute to the ATP site; that span reads AYSGGLDTS. L-citrulline-binding residues include Tyr100 and Ser105. Residue Gly130 coordinates ATP. Positions 132, 136, and 137 each coordinate L-aspartate. Asn136 provides a ligand contact to L-citrulline. Residues Arg140, Ser189, Ser198, Glu274, and Tyr286 each coordinate L-citrulline.

It belongs to the argininosuccinate synthase family. Type 1 subfamily. As to quaternary structure, homotetramer.

The protein resides in the cytoplasm. The catalysed reaction is L-citrulline + L-aspartate + ATP = 2-(N(omega)-L-arginino)succinate + AMP + diphosphate + H(+). It participates in amino-acid biosynthesis; L-arginine biosynthesis; L-arginine from L-ornithine and carbamoyl phosphate: step 2/3. This Shewanella halifaxensis (strain HAW-EB4) protein is Argininosuccinate synthase.